The chain runs to 69 residues: Cytochrome b-c1 complex subunit 6 (69 aa).

Cystine bridges form between cysteine 17–cysteine 59 and cysteine 31–cysteine 45.

This sequence belongs to the UQCRH/QCR6 family. In terms of assembly, component of the ubiquinol-cytochrome c oxidoreductase (cytochrome b-c1 complex, complex III, CIII), a multisubunit enzyme composed of 3 respiratory subunits cytochrome b, cytochrome c1 and Rieske protein, 2 core protein subunits, and additional low-molecular weight protein subunits. The complex exists as an obligatory dimer and forms supercomplexes (SCs) in the inner mitochondrial membrane with cytochrome c oxidase (complex IV, CIV).

Its subcellular location is the mitochondrion inner membrane. In terms of biological role, component of the ubiquinol-cytochrome c oxidoreductase, a multisubunit transmembrane complex that is part of the mitochondrial electron transport chain which drives oxidative phosphorylation. The respiratory chain contains 3 multisubunit complexes succinate dehydrogenase (complex II, CII), ubiquinol-cytochrome c oxidoreductase (cytochrome b-c1 complex, complex III, CIII) and cytochrome c oxidase (complex IV, CIV), that cooperate to transfer electrons derived from NADH and succinate to molecular oxygen, creating an electrochemical gradient over the inner membrane that drives transmembrane transport and the ATP synthase. The cytochrome b-c1 complex catalyzes electron transfer from ubiquinol to cytochrome c, linking this redox reaction to translocation of protons across the mitochondrial inner membrane, with protons being carried across the membrane as hydrogens on the quinol. In the process called Q cycle, 2 protons are consumed from the matrix, 4 protons are released into the intermembrane space and 2 electrons are passed to cytochrome c. This chain is Cytochrome b-c1 complex subunit 6, found in Solanum tuberosum (Potato).